The sequence spans 445 residues: RNA pseudouridine synthase 2, chloroplastic (445 aa).

A chloroplast-targeting transit peptide spans 1 to 44 (MATTAAASPPAIATALSALLRRQRRRSSRCVGASHARCLAADAN). The tract at residues 47 to 66 (AVAPSRRGGHGGTRLEEAVP) is disordered. One can recognise an S4 RNA-binding domain in the interval 72–147 (SRIDAWISAR…IPLDIVYEDD (76 aa)). Asp-235 is a catalytic residue.

This sequence belongs to the pseudouridine synthase RluA family.

It is found in the plastid. The protein localises to the chloroplast. It catalyses the reaction a uridine in RNA = a pseudouridine in RNA. The protein is RNA pseudouridine synthase 2, chloroplastic of Oryza sativa subsp. japonica (Rice).